Reading from the N-terminus, the 264-residue chain is GTP cyclohydrolase FolE2 (264 aa).

The protein belongs to the GTP cyclohydrolase IV family.

It carries out the reaction GTP + H2O = 7,8-dihydroneopterin 3'-triphosphate + formate + H(+). It functions in the pathway cofactor biosynthesis; 7,8-dihydroneopterin triphosphate biosynthesis; 7,8-dihydroneopterin triphosphate from GTP: step 1/1. Its function is as follows. Converts GTP to 7,8-dihydroneopterin triphosphate. This chain is GTP cyclohydrolase FolE2, found in Ruthia magnifica subsp. Calyptogena magnifica.